Consider the following 461-residue polypeptide: MTDISMRFGMQAEAREFLKLAVPLAGAQMAQAATGFVDTVMMGWLGQDVLAAGGLATMIFMAFMMTGVGLISGVSPLVAEAYGAGQTRRIGQLTRQGLWIVLLLSIPGMLFITHLNGVMHWSGQADTTIILSDSYLNVMAWGLFPAIAFATLRGCIIALSQARPIMLIVIAATLFNILGNYGLGFGKWGFPALGITGLAIASISAHWIMFLSLLVYMLWHKPLHQYSLFDSLHHLKPRILQQLLWVGGPIGIAAVLEYGLYLTASFFMGALGTPILAAHQVVSQTVLVLFMVPLAMSYAATVRVGQWFGQQHWPQIRQAALVSIGLAVLFMLTAGIALLAYPQQIIGLYLDLNDPANGEALNVGISIMKIAAFGLVLDGLQRTANGVLQGLQDTRIPMVLGTIAYWGIGLTASYLLGFYTPLSGAGVWIGTYIGLAAASIAYLWRFQKVMVRKKSLPVARS.

The next 12 membrane-spanning stretches (helical) occupy residues 17 to 37 (FLKL…TGFV), 51 to 71 (AAGG…VGLI), 98 to 118 (LWIV…LNGV), 138 to 158 (VMAW…CIIA), 165 to 185 (IMLI…GLGF), 198 to 218 (LAIA…VYML), 243 to 263 (LLWV…LYLT), 275 to 295 (ILAA…VPLA), 320 to 340 (ALVS…ALLA), 360 to 380 (ALNV…LDGL), 398 to 418 (MVLG…LLGF), and 424 to 444 (GAGV…AYLW).

The protein belongs to the multi antimicrobial extrusion (MATE) (TC 2.A.66.1) family.

Its subcellular location is the cell inner membrane. Its function is as follows. Multidrug efflux pump. The sequence is that of Probable multidrug resistance protein NorM (norM) from Synechocystis sp. (strain ATCC 27184 / PCC 6803 / Kazusa).